The sequence spans 548 residues: Membrane protein insertase YidC (548 aa).

Residues 6-26 form a helical membrane-spanning segment; the sequence is NLLVIALLFVSFMIWQAWEQD. Residues 28-55 form a disordered region; that stretch reads NPQPQAQQTTQTTTTAAGSAADQGVPAS. Residues 30–50 are compositionally biased toward low complexity; sequence QPQAQQTTQTTTTAAGSAADQ. A run of 4 helical transmembrane segments spans residues 350 to 370, 420 to 440, 458 to 478, and 499 to 519; these read FVGNWGFSIIIITFIVRGIMY, LGGCFPLLIQMPIFLALYYML, LSAQDPYYILPILMGVTMFFI, and PVIFTVFFLWFPSGLVLYYIV.

It belongs to the OXA1/ALB3/YidC family. Type 1 subfamily. Interacts with the Sec translocase complex via SecD. Specifically interacts with transmembrane segments of nascent integral membrane proteins during membrane integration.

The protein resides in the cell inner membrane. Functionally, required for the insertion and/or proper folding and/or complex formation of integral membrane proteins into the membrane. Involved in integration of membrane proteins that insert both dependently and independently of the Sec translocase complex, as well as at least some lipoproteins. Aids folding of multispanning membrane proteins. The chain is Membrane protein insertase YidC from Escherichia fergusonii (strain ATCC 35469 / DSM 13698 / CCUG 18766 / IAM 14443 / JCM 21226 / LMG 7866 / NBRC 102419 / NCTC 12128 / CDC 0568-73).